We begin with the raw amino-acid sequence, 326 residues long: Archaeal actin homolog (326 aa).

Residues 10 to 14, Ser179, Gln231, 285 to 288, and Gln311 contribute to the ATP site; these read YGDTK and GGAN.

The protein belongs to the thermophilic archaeal actin family.

Its function is as follows. Polymerizes into bundles of filaments. Polymerization requires NTP and is optimal with ATP, but GTP, UTP, CTP, and even the deoxy form of NTP can also support the polymerization reaction. The protein is Archaeal actin homolog of Thermoplasma volcanium (strain ATCC 51530 / DSM 4299 / JCM 9571 / NBRC 15438 / GSS1).